The sequence spans 691 residues: Elongation factor G 2 (691 aa).

The tr-type G domain occupies 8-287 (DRYRNIGIMA…AVVDYLPSPL (280 aa)). Residues 17–24 (AHIDAGKT), 85–89 (DTPGH), and 139–142 (NKMD) each bind GTP.

Belongs to the TRAFAC class translation factor GTPase superfamily. Classic translation factor GTPase family. EF-G/EF-2 subfamily.

The protein localises to the cytoplasm. Catalyzes the GTP-dependent ribosomal translocation step during translation elongation. During this step, the ribosome changes from the pre-translocational (PRE) to the post-translocational (POST) state as the newly formed A-site-bound peptidyl-tRNA and P-site-bound deacylated tRNA move to the P and E sites, respectively. Catalyzes the coordinated movement of the two tRNA molecules, the mRNA and conformational changes in the ribosome. The polypeptide is Elongation factor G 2 (Myxococcus xanthus (strain DK1622)).